The primary structure comprises 222 residues: 4'-phosphopantetheinyl transferase Npt (222 aa).

Mg(2+) is bound by residues D105, E107, and E147.

The protein belongs to the P-Pant transferase superfamily. In terms of assembly, monomer. Requires Mg(2+) as cofactor.

The enzyme catalyses apo-[ACP] + CoA = holo-[ACP] + adenosine 3',5'-bisphosphate + H(+). Functionally, catalyzes the transfer of the 4'-phosphopantetheine moiety from coenzyme A to a serine residue in the acyl-carrier domain of carboxylic acid reductase Car, thus converting apo-Car to fully active holo-Car. Is probably also responsible for the activation of other proteins with phosphopantetheine attachment sites. The protein is 4'-phosphopantetheinyl transferase Npt (npt) of Nocardia iowensis.